The sequence spans 433 residues: Cyclin-dependent kinase F-3 (433 aa).

The 280-residue stretch at tyrosine 4–phenylalanine 283 folds into the Protein kinase domain. Residues isoleucine 10–valine 18 and lysine 33 contribute to the ATP site. Aspartate 125 acts as the Proton acceptor in catalysis. Phosphoserine is present on serine 151. Threonine 156 is subject to Phosphothreonine.

Belongs to the protein kinase superfamily. CMGC Ser/Thr protein kinase family. CDC2/CDKX subfamily.

It carries out the reaction L-seryl-[protein] + ATP = O-phospho-L-seryl-[protein] + ADP + H(+). It catalyses the reaction L-threonyl-[protein] + ATP = O-phospho-L-threonyl-[protein] + ADP + H(+). The catalysed reaction is [DNA-directed RNA polymerase] + ATP = phospho-[DNA-directed RNA polymerase] + ADP + H(+). The protein is Cyclin-dependent kinase F-3 (CDKF-3) of Oryza sativa subsp. japonica (Rice).